The primary structure comprises 287 residues: Acetylglutamate kinase (287 aa).

Residues 70-71 (GG), Arg-92, and Asn-184 contribute to the substrate site.

It belongs to the acetylglutamate kinase family. ArgB subfamily.

It localises to the cytoplasm. The enzyme catalyses N-acetyl-L-glutamate + ATP = N-acetyl-L-glutamyl 5-phosphate + ADP. It participates in amino-acid biosynthesis; L-arginine biosynthesis; N(2)-acetyl-L-ornithine from L-glutamate: step 2/4. Catalyzes the ATP-dependent phosphorylation of N-acetyl-L-glutamate. The sequence is that of Acetylglutamate kinase from Dinoroseobacter shibae (strain DSM 16493 / NCIMB 14021 / DFL 12).